The sequence spans 298 residues: Lysozyme-like protein 1 (298 aa).

Positions 1–16 are cleaved as a signal peptide; sequence MLKLAFVTFLFALASA. In terms of domain architecture, Ch-type lysozyme spans 59–277; that stretch reads YAYAVDISVP…AAASSKNTDF (219 aa).

It belongs to the glycosyl hydrolase 25 family. As to expression, expressed in intestine, IL2 and IL6 neurons and some neurons in the head ganglia.

The protein resides in the cytoplasmic vesicle lumen. Involved in resistance to Gram-negative bacterium S.marcescens and to bacterium Gram-positive S.aureus infection. The sequence is that of Lysozyme-like protein 1 from Caenorhabditis elegans.